Consider the following 299-residue polypeptide: Taste receptor type 2 member 1 (299 aa).

The Extracellular portion of the chain corresponds to 1-9; the sequence is MLESHLIIY. A helical membrane pass occupies residues 10 to 30; the sequence is FLLAVIQFLLGTFTNGIIVVV. The Cytoplasmic segment spans residues 31–55; that stretch reads NGIDLIKHRKMAPLDLLLSCLAVSR. The helical transmembrane segment at 56–76 threads the bilayer; it reads IFLQLFIFYINVVVIFLIEFI. The Extracellular segment spans residues 77–81; sequence TCSAS. A helical membrane pass occupies residues 82-102; the sequence is CAFLVFVNELELWLATWLGVF. The Cytoplasmic segment spans residues 103-124; the sequence is YCAKVASVLHPLFIWLKMRISK. A helical membrane pass occupies residues 125 to 145; the sequence is SVPWMILGSLLYVSMICIFHI. The Extracellular segment spans residues 146-178; sequence KYTGFMVPYFLRNLFFQNATIQTEVKQAIQIFS. A glycan (N-linked (GlcNAc...) asparagine) is linked at Asn163. A helical transmembrane segment spans residues 179-199; that stretch reads FVAELLVPLLIFLVAVLLLIF. Topologically, residues 200–222 are cytoplasmic; the sequence is SLGRHTRQMRNTVAGSRVPGRGA. The chain crosses the membrane as a helical span at residues 223–243; the sequence is HISALLSILSFLILYISHYLI. At 244–257 the chain is on the extracellular side; sequence KTFLSSLKFHVKRF. A helical membrane pass occupies residues 258–278; sequence VFLFCILVIGTYPSGHSLILI. Over 279–299 the chain is Cytoplasmic; the sequence is LGNPKLKQNTKKFLCHSKCCQ.

Belongs to the G-protein coupled receptor T2R family.

It is found in the membrane. In terms of biological role, receptor that may play a role in the perception of bitterness and is gustducin-linked. May play a role in sensing the chemical composition of the gastrointestinal content. The activity of this receptor may stimulate alpha gustducin, mediate PLC-beta-2 activation and lead to the gating of TRPM5. The polypeptide is Taste receptor type 2 member 1 (TAS2R1) (Chlorocebus aethiops (Green monkey)).